Here is a 103-residue protein sequence, read N- to C-terminus: Phosphoribosyl-ATP pyrophosphatase (103 aa).

It belongs to the PRA-PH family.

The protein resides in the cytoplasm. It carries out the reaction 1-(5-phospho-beta-D-ribosyl)-ATP + H2O = 1-(5-phospho-beta-D-ribosyl)-5'-AMP + diphosphate + H(+). It participates in amino-acid biosynthesis; L-histidine biosynthesis; L-histidine from 5-phospho-alpha-D-ribose 1-diphosphate: step 2/9. This chain is Phosphoribosyl-ATP pyrophosphatase, found in Listeria monocytogenes serotype 4a (strain HCC23).